A 551-amino-acid polypeptide reads, in one-letter code: Arginine--tRNA ligase (551 aa).

Residues 123-133 (ANPTGPLTIGR) carry the 'HIGH' region motif.

It belongs to the class-I aminoacyl-tRNA synthetase family. Monomer.

The protein resides in the cytoplasm. The enzyme catalyses tRNA(Arg) + L-arginine + ATP = L-arginyl-tRNA(Arg) + AMP + diphosphate. This Chlorobaculum parvum (strain DSM 263 / NCIMB 8327) (Chlorobium vibrioforme subsp. thiosulfatophilum) protein is Arginine--tRNA ligase.